The sequence spans 182 residues: Large ribosomal subunit protein bL25 (182 aa).

This sequence belongs to the bacterial ribosomal protein bL25 family. CTC subfamily. As to quaternary structure, part of the 50S ribosomal subunit; part of the 5S rRNA/L5/L18/L25 subcomplex. Contacts the 5S rRNA. Binds to the 5S rRNA independently of L5 and L18.

In terms of biological role, this is one of the proteins that binds to the 5S RNA in the ribosome where it forms part of the central protuberance. This Borrelia duttonii (strain Ly) protein is Large ribosomal subunit protein bL25.